The chain runs to 419 residues: UDP-N-acetylglucosamine 1-carboxyvinyltransferase 2 (419 aa).

24–25 (KN) is a phosphoenolpyruvate binding site. Arginine 94 contributes to the UDP-N-acetyl-alpha-D-glucosamine binding site. Cysteine 118 acts as the Proton donor in catalysis. Cysteine 118 carries the post-translational modification 2-(S-cysteinyl)pyruvic acid O-phosphothioketal. Residues 123–127 (RPIDQ), aspartate 307, and isoleucine 329 each bind UDP-N-acetyl-alpha-D-glucosamine.

Belongs to the EPSP synthase family. MurA subfamily.

The protein localises to the cytoplasm. The catalysed reaction is phosphoenolpyruvate + UDP-N-acetyl-alpha-D-glucosamine = UDP-N-acetyl-3-O-(1-carboxyvinyl)-alpha-D-glucosamine + phosphate. It participates in cell wall biogenesis; peptidoglycan biosynthesis. Cell wall formation. Adds enolpyruvyl to UDP-N-acetylglucosamine. This Staphylococcus epidermidis (strain ATCC 12228 / FDA PCI 1200) protein is UDP-N-acetylglucosamine 1-carboxyvinyltransferase 2.